The following is a 373-amino-acid chain: sn-glycerol-3-phosphate import ATP-binding protein UgpC (373 aa).

Residues 4-235 form the ABC transporter domain; sequence LTLSNITKSY…PASVFVATFI (232 aa). ATP is bound at residue 37–44; the sequence is GPSGCGKS.

Belongs to the ABC transporter superfamily. sn-glycerol-3-phosphate importer (TC 3.A.1.1.3) family. In terms of assembly, the complex is composed of two ATP-binding proteins (UgpC), two transmembrane proteins (UgpA and UgpE) and a solute-binding protein (UgpB).

It is found in the cell inner membrane. The enzyme catalyses sn-glycerol 3-phosphate(out) + ATP + H2O = sn-glycerol 3-phosphate(in) + ADP + phosphate + H(+). Functionally, part of the ABC transporter complex UgpBAEC involved in sn-glycerol-3-phosphate (G3P) import. Responsible for energy coupling to the transport system. In Psychromonas ingrahamii (strain DSM 17664 / CCUG 51855 / 37), this protein is sn-glycerol-3-phosphate import ATP-binding protein UgpC.